Reading from the N-terminus, the 318-residue chain is uncharacterized protein (318 aa).

This is an uncharacterized protein from Ictaluridae (bullhead catfishes).